The sequence spans 411 residues: Potassium channel subfamily K member 3 (411 aa).

Residues M1–T8 are Cytoplasmic-facing. A helical membrane pass occupies residues L9–L29. An N-linked (GlcNAc...) asparagine glycan is attached at N53. Residues W78–P101 constitute an intramembrane region (pore-forming). A helical membrane pass occupies residues V108 to L128. Residues G129–N158 are Cytoplasmic-facing. A helical transmembrane segment spans residues M159–S179. An intramembrane region (pore-forming) is located at residues W184–A207. The chain crosses the membrane as a helical span at residues F223–V243. At L244–V411 the chain is on the cytoplasmic side.

The protein belongs to the two pore domain potassium channel (TC 1.A.1.8) family. Homodimer. Heterodimer with KCNK1. Heterodimer with KCNK9. In terms of tissue distribution, strongest expression in heart. Moderate expression in lung and brain. Low levels in liver, kidney and skeletal muscle. Expressed in cerebellar granule cells (at protein level).

The protein resides in the cell membrane. The enzyme catalyses K(+)(in) = K(+)(out). It catalyses the reaction Na(+)(in) = Na(+)(out). With respect to regulation, inhibited by extracellular acidification, muscarinic signaling, divalent metal cations Zn(2+) and Ba(2+), isoflurane, bupivacaine and phenytoin. Activated by protein kinase A. Ruthenium red resistant. Its function is as follows. K(+) channel that conducts voltage-dependent outward rectifying currents upon membrane depolarization. Voltage sensing is coupled to K(+) electrochemical gradient in an 'ion flux gating' mode where outward but not inward ion flow opens the gate. Changes ion selectivity and becomes permeable to Na(+) ions in response to extracellular acidification. Protonation of the pH sensor His-98 stabilizes C-type inactivation conformation likely converting the channel from outward K(+)-conducting, to inward Na(+)-conducting to nonconductive state. Homo- and heterodimerizes to form functional channels with distinct regulatory and gating properties. Allows K(+) currents with fast-gating kinetics important for the repolarization and hyperpolarization phases of action potentials. In cerebellar granule cells, heteromeric KCNK3:KCNK9 channel may hyperpolarize the resting membrane potential to limit intrinsic neuronal excitability, but once the action potential threshold is reached, it may support high-frequency action potential firing and increased neuronal excitability. Dispensable for central chemosensory respiration i.e. breathing controlled by brainstem CO2/pH, it rather conducts pH-sensitive currents and controls the firing rate of serotonergic raphe neurons involved in potentiation of the respiratory chemoreflex. Additionally, imparts chemosensitivity to type 1 cells in carotid bodies which respond to a decrease in arterial oxygen pressure or an increase in carbon dioxide pressure or pH to initiate adaptive changes in pulmonary ventilation. In adrenal gland, contributes to the maintenance of a hyperpolarized resting membrane potential of aldosterone-producing cells at zona glomerulosa and limits aldosterone release as part of a regulatory mechanism that controls arterial blood pressure and electrolyte homeostasis. In brown adipocytes, mediates K(+) efflux that counteracts norepinephrine-induced membrane depolarization, limits Ca(2+) efflux and downstream cAMP and PKA signaling, ultimately attenuating lipid oxidation and adaptive thermogenesis. This is Potassium channel subfamily K member 3 from Rattus norvegicus (Rat).